The primary structure comprises 275 residues: MSLVLAVYGKGGIGKSTTSANISAALALKGAKVLQIGCDPKHDSTFPITGKLQKTVIEALEEVDFHHEELTADDVIETGFAGIDGLEAGGPPAGSGCGGYVVGESVTLLQELGLYDKYDVILFDVLGDVVCGGFSAPLNYADYAIIIATNDFDSIFAANRLCMAIQQKSVRYKVKLAGIVANRVDYTTGGGTNMLDQFAEKVGTRLLAKVPYHELIRKSRFAGKTLFAMEDQPGKDDCLVPYNEIADFLMQENPAATVPVPIGDREIFSMVGGWQ.

Residues 12–17 (GIGKST) and lysine 41 each bind ATP. A Mg(2+)-binding site is contributed by serine 16. Residues cysteine 97 and cysteine 131 each contribute to the [4Fe-4S] cluster site. An ATP-binding site is contributed by 182–183 (NR).

Belongs to the NifH/BchL/ChlL family. As to quaternary structure, homodimer. Protochlorophyllide reductase is composed of three subunits; BchL, BchN and BchB. It depends on [4Fe-4S] cluster as a cofactor.

The catalysed reaction is chlorophyllide a + oxidized 2[4Fe-4S]-[ferredoxin] + 2 ADP + 2 phosphate = protochlorophyllide a + reduced 2[4Fe-4S]-[ferredoxin] + 2 ATP + 2 H2O. It participates in porphyrin-containing compound metabolism; bacteriochlorophyll biosynthesis (light-independent). In terms of biological role, component of the dark-operative protochlorophyllide reductase (DPOR) that uses Mg-ATP and reduced ferredoxin to reduce ring D of protochlorophyllide (Pchlide) to form chlorophyllide a (Chlide). This reaction is light-independent. The L component serves as a unique electron donor to the NB-component of the complex, and binds Mg-ATP. This chain is Light-independent protochlorophyllide reductase iron-sulfur ATP-binding protein, found in Chlorobium limicola (strain DSM 245 / NBRC 103803 / 6330).